The chain runs to 102 residues: Small ribosomal subunit protein uS10 (102 aa).

The protein belongs to the universal ribosomal protein uS10 family. Part of the 30S ribosomal subunit.

Functionally, involved in the binding of tRNA to the ribosomes. In Bacillus anthracis (strain A0248), this protein is Small ribosomal subunit protein uS10.